Here is a 276-residue protein sequence, read N- to C-terminus: 4-hydroxy-3-methylbut-2-enyl diphosphate reductase (276 aa).

C12 serves as a coordination point for [4Fe-4S] cluster. Positions 36 and 70 each coordinate (2E)-4-hydroxy-3-methylbut-2-enyl diphosphate. Dimethylallyl diphosphate-binding residues include H36 and H70. Residues H36 and H70 each contribute to the isopentenyl diphosphate site. C92 contacts [4Fe-4S] cluster. A (2E)-4-hydroxy-3-methylbut-2-enyl diphosphate-binding site is contributed by H120. Residue H120 participates in dimethylallyl diphosphate binding. H120 provides a ligand contact to isopentenyl diphosphate. Catalysis depends on E122, which acts as the Proton donor. (2E)-4-hydroxy-3-methylbut-2-enyl diphosphate is bound at residue T158. C186 provides a ligand contact to [4Fe-4S] cluster. (2E)-4-hydroxy-3-methylbut-2-enyl diphosphate contacts are provided by S214, S215, N216, and S258. S214, S215, N216, and S258 together coordinate dimethylallyl diphosphate. Isopentenyl diphosphate-binding residues include S214, S215, N216, and S258.

The protein belongs to the IspH family. [4Fe-4S] cluster is required as a cofactor.

The enzyme catalyses isopentenyl diphosphate + 2 oxidized [2Fe-2S]-[ferredoxin] + H2O = (2E)-4-hydroxy-3-methylbut-2-enyl diphosphate + 2 reduced [2Fe-2S]-[ferredoxin] + 2 H(+). It carries out the reaction dimethylallyl diphosphate + 2 oxidized [2Fe-2S]-[ferredoxin] + H2O = (2E)-4-hydroxy-3-methylbut-2-enyl diphosphate + 2 reduced [2Fe-2S]-[ferredoxin] + 2 H(+). It functions in the pathway isoprenoid biosynthesis; dimethylallyl diphosphate biosynthesis; dimethylallyl diphosphate from (2E)-4-hydroxy-3-methylbutenyl diphosphate: step 1/1. It participates in isoprenoid biosynthesis; isopentenyl diphosphate biosynthesis via DXP pathway; isopentenyl diphosphate from 1-deoxy-D-xylulose 5-phosphate: step 6/6. Catalyzes the conversion of 1-hydroxy-2-methyl-2-(E)-butenyl 4-diphosphate (HMBPP) into a mixture of isopentenyl diphosphate (IPP) and dimethylallyl diphosphate (DMAPP). Acts in the terminal step of the DOXP/MEP pathway for isoprenoid precursor biosynthesis. The polypeptide is 4-hydroxy-3-methylbut-2-enyl diphosphate reductase (Wolinella succinogenes (strain ATCC 29543 / DSM 1740 / CCUG 13145 / JCM 31913 / LMG 7466 / NCTC 11488 / FDC 602W) (Vibrio succinogenes)).